Here is a 1777-residue protein sequence, read N- to C-terminus: Fatty acid synthase subunit alpha (1777 aa).

The segment at 101–124 (APVESADNEPAQPAASSTPAAPAP) is disordered. Residues 110–120 (PAQPAASSTPA) are compositionally biased toward low complexity. The region spanning 151–237 (LSAIDVVISI…KVMGGHIDRL (87 aa)) is the Carrier domain. An O-(pantetheine 4'-phosphoryl)serine modification is found at serine 186. The tract at residues 563–803 (FTGRRVLVTG…ILSLLSGDIL (241 aa)) is ketoreductase (KR) domain. The 533-residue stretch at 1007-1539 (KEIMHEVVID…QKGGLVVGIA (533 aa)) folds into the Ketosynthase family 3 (KS3) domain. Residues cysteine 1193, histidine 1424, and histidine 1465 each act as for beta-ketoacyl synthase activity in the active site. Aspartate 1661 lines the Mg(2+) pocket. Acetyl-CoA is bound by residues 1661–1663 (DIE), 1706–1716 (EAIFKSLQIPS), 1730–1734 (SNGAQ), and 1760–1762 (ITH).

This sequence belongs to the thiolase-like superfamily. Fungal fatty acid synthetase subunit alpha family. In terms of assembly, fatty acid synthase is composed of alpha and beta subunits.

The catalysed reaction is acetyl-CoA + n malonyl-CoA + 2n NADPH + 4n H(+) = a long-chain-acyl-CoA + n CoA + n CO2 + 2n NADP(+).. It carries out the reaction a fatty acyl-[ACP] + malonyl-[ACP] + H(+) = a 3-oxoacyl-[ACP] + holo-[ACP] + CO2. The enzyme catalyses a (3R)-hydroxyacyl-[ACP] + NADP(+) = a 3-oxoacyl-[ACP] + NADPH + H(+). It functions in the pathway secondary metabolite biosynthesis. Its function is as follows. Fatty acid synthase alpha subunit; part of the gene cluster that mediates the biosynthesis of oryzines, natural products with an unusual maleidride backbone. The two subunits of the fungal fatty acid synthase oryfasA and oryfasB probably form octenoic acid. This fatty acid is most likely activated by the acyl-CoA ligase oryP to give octenyl-CoA before the citrate synthase-like protein oryE catalyzes condensation with oxaloacetate to form tricarboxylic acid. The next steps of the pathways are conjectural, but a favorite possible route has been proposed, beginning with decarboxylation and concomitant dehydration by the decarboxylase oryM, followed by tautomerization, which may lead to the production of a diene intermediate. Reduction of this diene intermediate could give the known metabolite piliformic acid. On the pathway to oryzine B and oryzine A, however, hydroxylation of the diene by the alpha-ketoglutarate-dependent dioxygenase oryG and lactonisation by the lactonohydrolases oryH or oryL could give oryzine B directly. Finally, enoyl reduction by the dehydrogenase oryD would then convert oryzine B into oryzine A. The protein is Fatty acid synthase subunit alpha of Aspergillus oryzae (strain ATCC 42149 / RIB 40) (Yellow koji mold).